Here is a 269-residue protein sequence, read N- to C-terminus: Ribosomal RNA large subunit methyltransferase E (269 aa).

The S-adenosyl-L-methionine site is built by Gly48, Trp50, Asp68, Asp86, and Asp111. Catalysis depends on Lys151, which acts as the Proton acceptor. The TRAM domain occupies 198–256 (PVAAGDRIEVTVEERGDEGDGIAYVEGYSIFVSDADVGETVTVEVVDAKPRFGFATRVD).

The protein belongs to the class I-like SAM-binding methyltransferase superfamily. RNA methyltransferase RlmE family.

Its subcellular location is the cytoplasm. It catalyses the reaction uridine(2552) in 23S rRNA + S-adenosyl-L-methionine = 2'-O-methyluridine(2552) in 23S rRNA + S-adenosyl-L-homocysteine + H(+). Specifically methylates the uridine in position 2552 of 23S rRNA at the 2'-O position of the ribose in the fully assembled 50S ribosomal subunit. The polypeptide is Ribosomal RNA large subunit methyltransferase E (Halorubrum lacusprofundi (strain ATCC 49239 / DSM 5036 / JCM 8891 / ACAM 34)).